A 354-amino-acid chain; its full sequence is Pyruvate dehydrogenase E1 component subunit alpha (354 aa).

Residues 1–29 form a disordered region; sequence MAKATQDSNRPHKADVGSAIPNHDLPPIP.

As to quaternary structure, heterodimer of an alpha and a beta chain. Requires thiamine diphosphate as cofactor.

It carries out the reaction N(6)-[(R)-lipoyl]-L-lysyl-[protein] + pyruvate + H(+) = N(6)-[(R)-S(8)-acetyldihydrolipoyl]-L-lysyl-[protein] + CO2. Its function is as follows. The pyruvate dehydrogenase complex catalyzes the overall conversion of pyruvate to acetyl-CoA and CO(2). It contains multiple copies of three enzymatic components: pyruvate dehydrogenase (E1), dihydrolipoamide acetyltransferase (E2) and lipoamide dehydrogenase (E3). The sequence is that of Pyruvate dehydrogenase E1 component subunit alpha (pdhA) from Zymomonas mobilis subsp. mobilis (strain ATCC 31821 / ZM4 / CP4).